We begin with the raw amino-acid sequence, 59 residues long: Sperm protamine P1-type (59 aa).

The disordered stretch occupies residues 1–59 (MARYRRNRSRSRSRRRRRRRGGRGGRRGRRRRRHGQRRRGRRGRERTRRRRRRRRRSSS).

The protein belongs to the protamine P1 family. As to expression, testis.

Its subcellular location is the nucleus. It localises to the chromosome. In terms of biological role, protamines substitute for histones in the chromatin of sperm during the haploid phase of spermatogenesis. They compact sperm DNA into a highly condensed, stable and inactive complex. This chain is Sperm protamine P1-type, found in Chrysemys picta bellii (Western painted turtle).